Here is a 215-residue protein sequence, read N- to C-terminus: Pyrrolidone-carboxylate peptidase (215 aa).

Residues Glu-80, Cys-143, and His-167 contribute to the active site.

The protein belongs to the peptidase C15 family. As to quaternary structure, homotetramer.

The protein localises to the cytoplasm. The catalysed reaction is Release of an N-terminal pyroglutamyl group from a polypeptide, the second amino acid generally not being Pro.. Removes 5-oxoproline from various penultimate amino acid residues except L-proline. The polypeptide is Pyrrolidone-carboxylate peptidase (Yersinia pseudotuberculosis serotype O:1b (strain IP 31758)).